The sequence spans 533 residues: MRKILPLRAWLAAGLILGSPFSHAASNLVFCSEGSPAGFDPAQYTTGTDYDATSVTLFNRLVQFERGGTRAIPALAESWDIGDDGKTYTFHLRKGVKFHSTDYFKPTREFNADDVLFTFQRMLDKNHPFRKAYPTEFPYFTDMGLDKNIARVEKLDEHRVKFTLNEVDAAFIQNLAMDVASIQSAEYAGQLLEAGKPQQINQKPIGTGPFILSRYQKDAQIRFKGNKDYWKPEDVKIDNLIFSINTDAAVRAQKLKAGECQITLNPRPADLKALQEAANLKVPSQPGFNLGYIAYNVTHKPFDQLEVRQALDMAVNKQAIIDAVYQGAGQLAVNGMPPTQWSYDETIKDAPFDPAKARELLKKAGVAEGTEITLWAMPVQRPYNPNAKLMAEMIQADWAKIGIKARIVSYEWGEYIKRAHAGEHDAMLFGWTGDNGDPDNWLATLYGCDSINGNNVSKWCDAAYDKLVKAAKRVSDQDKRSELYKQAQHILKEQVPITPIAHSTVYQPMSKSVHGFKISPFSRNAFYGVANQP.

Residues 1–24 form the signal peptide; that stretch reads MRKILPLRAWLAAGLILGSPFSHA.

Belongs to the bacterial solute-binding protein 5 family.

The protein resides in the periplasm. In terms of biological role, binds different dipeptides. Probably bind only L-amino acid containing dipeptides. The protein is Dipeptide-binding protein of Pseudomonas aeruginosa (strain ATCC 15692 / DSM 22644 / CIP 104116 / JCM 14847 / LMG 12228 / 1C / PRS 101 / PAO1).